The sequence spans 156 residues: ATP synthase subunit b (156 aa).

Residues 12–32 (IAFAIFVLFCMKFIWPALMGA) traverse the membrane as a helical segment.

This sequence belongs to the ATPase B chain family. F-type ATPases have 2 components, F(1) - the catalytic core - and F(0) - the membrane proton channel. F(1) has five subunits: alpha(3), beta(3), gamma(1), delta(1), epsilon(1). F(0) has three main subunits: a(1), b(2) and c(10-14). The alpha and beta chains form an alternating ring which encloses part of the gamma chain. F(1) is attached to F(0) by a central stalk formed by the gamma and epsilon chains, while a peripheral stalk is formed by the delta and b chains.

It is found in the cell inner membrane. In terms of biological role, f(1)F(0) ATP synthase produces ATP from ADP in the presence of a proton or sodium gradient. F-type ATPases consist of two structural domains, F(1) containing the extramembraneous catalytic core and F(0) containing the membrane proton channel, linked together by a central stalk and a peripheral stalk. During catalysis, ATP synthesis in the catalytic domain of F(1) is coupled via a rotary mechanism of the central stalk subunits to proton translocation. Functionally, component of the F(0) channel, it forms part of the peripheral stalk, linking F(1) to F(0). The polypeptide is ATP synthase subunit b (Psychrobacter sp. (strain PRwf-1)).